A 258-amino-acid chain; its full sequence is MKLDEVTISRAIIEEFSKVFLDYTDVDVALVGGGPANLVAAKYLAEAGLKTVIYEKKLAVGGGMWAGGMMFPRIVVQEDALHILDEFGISYHEYENGYYVANSIESVGKLISGATSAGAEIFNLVNVEDVMIRENDEICGLVINWTAVEIGKLHVDPLAIRSKVVVDGTGHPAVVCSTVQRKVPGAKLGELGVVGEKPMWADVGEKMLLDTTKEVYPNLYVAGMAANAVAGAPRMGPVFGGMLLSGKQVAELIIERLG.

Residues Ala-36, 55–56 (EK), Gly-63, Val-127, and 154–156 (HVD) contribute to the NAD(+) site. Fe cation is bound by residues Asp-156 and His-171. Position 224 (Met-224) interacts with NAD(+). Arg-234 is a binding site for glycine.

It belongs to the THI4 family. As to quaternary structure, homooctamer; tetramer of dimers. It depends on Fe(2+) as a cofactor.

The enzyme catalyses hydrogen sulfide + glycine + NAD(+) = ADP-5-ethyl-4-methylthiazole-2-carboxylate + nicotinamide + 3 H2O + H(+). The protein operates within cofactor biosynthesis; thiamine diphosphate biosynthesis. Involved in the biosynthesis of the thiazole moiety of thiamine. Catalyzes the conversion of NAD and glycine to adenosine diphosphate 5-(2-hydroxyethyl)-4-methylthiazole-2-carboxylate (ADT), an adenylated thiazole intermediate, using free sulfide as a source of sulfur. This is Thiamine thiazole synthase from Methanococcoides burtonii (strain DSM 6242 / NBRC 107633 / OCM 468 / ACE-M).